Reading from the N-terminus, the 500-residue chain is Cytochrome P450 monooxygenase ausR (500 aa).

The chain crosses the membrane as a helical span at residues 15-35 (GVGLYILWTVAVLFVIFKLLA). Cysteine 439 contacts heme.

It belongs to the cytochrome P450 family. It depends on heme as a cofactor.

It is found in the membrane. It functions in the pathway secondary metabolite biosynthesis; terpenoid biosynthesis. Its function is as follows. Cytochrome P450 monooxygenase; part of the gene cluster that mediates the biosynthesis of calidodehydroaustin, a fungal meroterpenoid. The first step of the pathway is the synthesis of 3,5-dimethylorsellinic acid by the polyketide synthase ausA. 3,5-dimethylorsellinic acid is then prenylated by the polyprenyl transferase ausN. Further epoxidation by the FAD-dependent monooxygenase ausM and cyclization by the probable terpene cyclase ausL lead to the formation of protoaustinoid A. Protoaustinoid A is then oxidized to spiro-lactone preaustinoid A3 by the combined action of the FAD-binding monooxygenases ausB and ausC, and the dioxygenase ausE. Acid-catalyzed keto-rearrangement and ring contraction of the tetraketide portion of preaustinoid A3 by ausJ lead to the formation of preaustinoid A4. The aldo-keto reductase ausK, with the help of ausH, is involved in the next step by transforming preaustinoid A4 into isoaustinone which is in turn hydroxylated by the P450 monooxygenase ausI to form austinolide. The cytochrome P450 monooxygenase ausG modifies austinolide to austinol. Austinol is further acetylated to austin by the O-acetyltransferase ausP, which spontaneously changes to dehydroaustin. The cytochrome P450 monooxygenase ausR then converts dehydroaustin is into 7-dehydrodehydroaustin. The hydroxylation catalyzed by ausR permits the O-acetyltransferase ausQ to add an additional acetyl group to the molecule, leading to the formation of acetoxydehydroaustin. The short chain dehydrogenase ausT catalyzes the reduction of the double bond present between carbon atoms 1 and 2 to convert 7-dehydrodehydroaustin into 1,2-dihydro-7-hydroxydehydroaustin. AusQ catalyzes not only an acetylation reaction but also the addition of the PKS ausV diketide product to 1,2-dihydro-7-hydroxydehydroaustin, forming precalidodehydroaustin. Finally, the iron/alpha-ketoglutarate-dependent dioxygenase converts precalidodehydroaustin into calidodehydroaustin. In Aspergillus calidoustus, this protein is Cytochrome P450 monooxygenase ausR.